The sequence spans 848 residues: Crooked neck-like protein 1 (848 aa).

An N-acetylalanine modification is found at Thr-2. The disordered stretch occupies residues 81-106; sequence RSSRTPHSTRCRKEDAQPGHHGNGAA. HAT repeat units follow at residues 222–254, 256–288, 290–322, 324–355, 357–388, 390–425, 427–461, 471–503, 505–539, 549–585, 587–618, 620–652, 654–688, 690–721, 726–767, 769–807, and 809–834; these read DYKL…WEES, KEIQ…MEMK, RQVN…MEEM, GNVA…FELR, KEVD…FEEK, AYFA…FEEN, KEFE…FEKK, IIVS…LVES, AEAE…LWIN, KDPE…FEIR, KNLS…LELQ, REFD…LETI, GDID…FEIE, EETE…FELS, GSLT…EFGT, SDKE…YIFP, and DAAN…EKED. Residues 411-628 form a mediates interaction with HSP90 region; sequence MDEHLYVAFA…LREFDRCRKL (218 aa). The residue at position 503 (Ser-503) is a Phosphoserine. Residues 827–848 are disordered; the sequence is KQQQEKEDAEHHPDEDVDESES. Positions 828–840 are enriched in basic and acidic residues; it reads QQQEKEDAEHHPD.

It belongs to the crooked-neck family. As to quaternary structure, identified in the spliceosome C complex. Present in a spliceosome complex assembled in vitro containing CRNKL1, HPRP8BP and SNRPB2. Component of the minor spliceosome, which splices U12-type introns. Isoform 2 seems to be predominant in the spliceosome complex. Interacts with PPIL2 (via the PPIase cyclophilin-type domain); they may form a trimeric complex with HSP90. Widely expressed. Highly expressed in testis. Not detected in brain and lung.

It is found in the nucleus. It localises to the nucleus speckle. Functionally, involved in pre-mRNA splicing process. As a component of the minor spliceosome, involved in the splicing of U12-type introns in pre-mRNAs. The sequence is that of Crooked neck-like protein 1 (CRNKL1) from Homo sapiens (Human).